A 469-amino-acid polypeptide reads, in one-letter code: ATP-dependent protease ATPase subunit HslU (469 aa).

ATP is bound by residues isoleucine 21, 63–68 (GVGKTE), aspartate 282, glutamate 347, and arginine 419.

Belongs to the ClpX chaperone family. HslU subfamily. In terms of assembly, a double ring-shaped homohexamer of HslV is capped on each side by a ring-shaped HslU homohexamer. The assembly of the HslU/HslV complex is dependent on binding of ATP.

The protein localises to the cytoplasm. In terms of biological role, ATPase subunit of a proteasome-like degradation complex; this subunit has chaperone activity. The binding of ATP and its subsequent hydrolysis by HslU are essential for unfolding of protein substrates subsequently hydrolyzed by HslV. HslU recognizes the N-terminal part of its protein substrates and unfolds these before they are guided to HslV for hydrolysis. In Petrotoga mobilis (strain DSM 10674 / SJ95), this protein is ATP-dependent protease ATPase subunit HslU.